The chain runs to 354 residues: tRNA N6-adenosine threonylcarbamoyltransferase (354 aa).

Residues His115 and His119 each coordinate Fe cation. Residues 138 to 142, Asp171, Gly184, and Asn276 each bind substrate; that span reads LVSGG. Asp304 contributes to the Fe cation binding site.

Belongs to the KAE1 / TsaD family. Fe(2+) serves as cofactor.

It is found in the cytoplasm. It catalyses the reaction L-threonylcarbamoyladenylate + adenosine(37) in tRNA = N(6)-L-threonylcarbamoyladenosine(37) in tRNA + AMP + H(+). Its function is as follows. Required for the formation of a threonylcarbamoyl group on adenosine at position 37 (t(6)A37) in tRNAs that read codons beginning with adenine. Is involved in the transfer of the threonylcarbamoyl moiety of threonylcarbamoyl-AMP (TC-AMP) to the N6 group of A37, together with TsaE and TsaB. TsaD likely plays a direct catalytic role in this reaction. The chain is tRNA N6-adenosine threonylcarbamoyltransferase from Xanthomonas campestris pv. campestris (strain 8004).